Consider the following 98-residue polypeptide: uncharacterized protein (98 aa).

This is an uncharacterized protein from Bacillus subtilis (strain 168).